We begin with the raw amino-acid sequence, 877 residues long: MDTVGTDAAAASINERRFAQSTSPKVSVKSQDSLFLITYSNMQQTVVQASLADRYPSLKKLNILLYIDIPTIDYYNDEMTHNKLSRLNKRFKLHRLRNSIAQSFSNTSTAEDNDKFWEELKSLISSRSTPENKFDLNVLVSSSGSLRYVETIRFLVEKLFNSFKDLYVQKKLNLCFQINVSPTSLKWFSTFLNAELLNLKIINWQNIGSFTKTIQNSKSLPFKEYYTKLNEKFTGSNQSNGSMQDQTVLDSIVIVTNSTGVKALLTLLSDHPLTSLISQESIKALHEYSDAVNEDKGDDQSNTSLKRNSSSLLNFQNSVLTSNKDKSVRIRSLSINRKSNRAHMFKTNESITTIPSTSINNLIGQESNLRKQPSGTALHLQSHLHPHSRSQSYSSSNMSRSPSPFPYGKTPSNDELVYDELNNQINEVQDRAKNEEIVLYNNNNYDDYTKERGEQEQDRTSYADEYGFNYDDEEGGNEDNYDDDEDDDDDDDDDDESDDEGLSFYAPSILSRSGSSTDVLSSGIDSMAKNSKETRGRFRSLSLMDPALQKPFNQKFPNSQQPDSAGASSPKRSTSSNHFTNVYVHDGDFDGTDTINNKKNLSSATLIKRKSLMNRNLAPSISNGLIPPEFISRISTPSTSASSSNSSLNDMSTVSNAFSKLLNDTSKKQKFLNSPIPQHTQQASPLLMRNNSNSNLLFEKNLINKSFEELRRQPSVNLFSTLMNGNMEKNGLALNFKSRTPTDALMANSIKNSNNSSHRLLNLEEEDQIMSGSLPKEREDDNDSTNSTIVPNHPDNDNYNDNDNDNNTGINSNNFNLNLYDDNDSAGFTDVTTEGVKYSNSNSTVTKPVYKKAVTLDLYGEDDMDNMGGWVLGGNAR.

Residues Ser309, Ser310, Ser311, Ser332, and Ser334 each carry the phosphoserine modification. Disordered regions lie at residues 369–414 (LRKQ…PSND), 446–521 (DDYT…DVLS), and 550–579 (KPFN…SNHF). The span at 389–402 (RSQSYSSSNMSRSP) shows a compositional bias: low complexity. Residues 412 to 441 (SNDELVYDELNNQINEVQDRAKNEEIVLYN) are a coiled coil. The span at 447–462 (DYTKERGEQEQDRTSY) shows a compositional bias: basic and acidic residues. The span at 470-501 (YDDEEGGNEDNYDDDEDDDDDDDDDDESDDEG) shows a compositional bias: acidic residues. 2 stretches are compositionally biased toward polar residues: residues 510 to 521 (LSRSGSSTDVLS) and 551 to 579 (PFNQ…SNHF). Residues Lys668 and Lys670 each participate in a glycyl lysine isopeptide (Lys-Gly) (interchain with G-Cter in ubiquitin) cross-link. Ser692, Ser694, and Ser706 each carry phosphoserine. Positions 773–815 (SLPKEREDDNDSTNSTIVPNHPDNDNYNDNDNDNNTGINSNNF) are disordered. Positions 805–815 (DNNTGINSNNF) are enriched in low complexity. A Phosphoserine modification is found at Ser841.

Interacts with ENV10/SND2.

It localises to the cytoplasm. In terms of biological role, functions in the SND pathway, a SRP (signal recognition particle) and GET (guided entry of tail-anchored proteins) independent pathway for targeting a broad range of substrate proteins to the endoplasmic reticulum. SND functions in parallel to GET in targeting proteins with downstream hydrophobic motifs. This chain is SRP-independent targeting protein 1, found in Saccharomyces cerevisiae (strain ATCC 204508 / S288c) (Baker's yeast).